The chain runs to 346 residues: Probable dual-specificity RNA methyltransferase RlmN (346 aa).

Catalysis depends on E91, which acts as the Proton acceptor. The Radical SAM core domain occupies 97 to 325 (TEKRLTVCVS…VSVRYSKGLE (229 aa)). Cysteines 104 and 330 form a disulfide. Residues C111, C115, and C118 each contribute to the [4Fe-4S] cluster site. Residues 158 to 159 (GE), S188, 211 to 213 (SLH), and N287 contribute to the S-adenosyl-L-methionine site. C330 (S-methylcysteine intermediate) is an active-site residue.

Belongs to the radical SAM superfamily. RlmN family. [4Fe-4S] cluster serves as cofactor.

The protein localises to the cytoplasm. The catalysed reaction is adenosine(2503) in 23S rRNA + 2 reduced [2Fe-2S]-[ferredoxin] + 2 S-adenosyl-L-methionine = 2-methyladenosine(2503) in 23S rRNA + 5'-deoxyadenosine + L-methionine + 2 oxidized [2Fe-2S]-[ferredoxin] + S-adenosyl-L-homocysteine. The enzyme catalyses adenosine(37) in tRNA + 2 reduced [2Fe-2S]-[ferredoxin] + 2 S-adenosyl-L-methionine = 2-methyladenosine(37) in tRNA + 5'-deoxyadenosine + L-methionine + 2 oxidized [2Fe-2S]-[ferredoxin] + S-adenosyl-L-homocysteine. Its function is as follows. Specifically methylates position 2 of adenine 2503 in 23S rRNA and position 2 of adenine 37 in tRNAs. The chain is Probable dual-specificity RNA methyltransferase RlmN from Picosynechococcus sp. (strain ATCC 27264 / PCC 7002 / PR-6) (Agmenellum quadruplicatum).